We begin with the raw amino-acid sequence, 781 residues long: AP-3 complex subunit beta (781 aa).

5 HEAT repeats span residues 113-151 (PNLA…ASLY), 153-186 (IILH…EQGI), 187-224 (SIKD…QELQ), 294-332 (DHDL…PKTF), and 521-559 (PRIC…HDVD). 2 disordered regions span residues 694 to 713 (KPKR…TSSH) and 731 to 781 (ARQS…ETTE). The span at 699-712 (ASVSSVPSNTFTSS) shows a compositional bias: polar residues. Positions 746 to 758 (STSEETDHTDDES) are enriched in acidic residues. Residues 759-774 (GSSSGDESTESSYVSS) are compositionally biased toward low complexity.

Belongs to the adaptor complexes large subunit family. As to quaternary structure, adaptor protein complex 3 (AP-3) is a heterotetramer composed of 2 large adaptins (APL5 and APL6), a medium adaptin (APM3) and a small adaptin (APS3).

It localises to the golgi apparatus. It is found in the cytoplasmic vesicle. Its subcellular location is the clathrin-coated vesicle membrane. Functionally, part of the AP-3 complex, an adaptor-related complex which is not clathrin-associated. The complex is associated with the Golgi region as well as more peripheral structures. It facilitates the budding of vesicles from the Golgi membrane and may be directly involved in trafficking to the vacuole. The sequence is that of AP-3 complex subunit beta (APL6) from Eremothecium gossypii (strain ATCC 10895 / CBS 109.51 / FGSC 9923 / NRRL Y-1056) (Yeast).